The following is a 338-amino-acid chain: Aspartate--ammonia ligase (338 aa).

Belongs to the class-II aminoacyl-tRNA synthetase family. AsnA subfamily.

It is found in the cytoplasm. The catalysed reaction is L-aspartate + NH4(+) + ATP = L-asparagine + AMP + diphosphate + H(+). It functions in the pathway amino-acid biosynthesis; L-asparagine biosynthesis; L-asparagine from L-aspartate (ammonia route): step 1/1. This is Aspartate--ammonia ligase from Lactobacillus delbrueckii subsp. bulgaricus (strain ATCC BAA-365 / Lb-18).